Consider the following 594-residue polypeptide: Arginine--tRNA ligase (594 aa).

Residues 139 to 149 (ANPTGPLHVGH) carry the 'HIGH' region motif.

The protein belongs to the class-I aminoacyl-tRNA synthetase family. As to quaternary structure, monomer.

The protein resides in the cytoplasm. It carries out the reaction tRNA(Arg) + L-arginine + ATP = L-arginyl-tRNA(Arg) + AMP + diphosphate. The chain is Arginine--tRNA ligase from Paraburkholderia phymatum (strain DSM 17167 / CIP 108236 / LMG 21445 / STM815) (Burkholderia phymatum).